The following is a 194-amino-acid chain: Fe/S biogenesis protein NfuA (194 aa).

[4Fe-4S] cluster contacts are provided by C151 and C154.

Belongs to the NfuA family. In terms of assembly, homodimer. It depends on [4Fe-4S] cluster as a cofactor.

Functionally, involved in iron-sulfur cluster biogenesis. Binds a 4Fe-4S cluster, can transfer this cluster to apoproteins, and thereby intervenes in the maturation of Fe/S proteins. Could also act as a scaffold/chaperone for damaged Fe/S proteins. This Actinobacillus succinogenes (strain ATCC 55618 / DSM 22257 / CCUG 43843 / 130Z) protein is Fe/S biogenesis protein NfuA.